Reading from the N-terminus, the 499-residue chain is Aprataxin and PNK-like factor (499 aa).

Residues 1-108 (MPSDFFLQPL…RVFSAESEVE (108 aa)) enclose the FHA-like domain. At Ser-116 the chain carries Phosphoserine; by ATM. 3 disordered regions span residues 134–183 (VNLP…TQRK), 197–292 (DQSL…KTNK), and 305–358 (VSKH…DTAD). Polar residues predominate over residues 141–152 (TGASQLQGSPEI). Residue Ser-149 is modified to Phosphoserine. The short motif at 182–191 (RKRILPAWML) is the KBM element. Residues 239 to 248 (PSGNSKSVSA) show a composition bias toward polar residues. The span at 251–261 (DPGKKCRKADQ) shows a compositional bias: basic and acidic residues. A compositionally biased stretch (low complexity) spans 264-278 (PGVSSENVPESSSSN). Residues 281-292 (KDPDVDIVKTNK) are compositionally biased toward basic and acidic residues. The span at 340–349 (PESSSAPSSP) shows a compositional bias: low complexity. Residues Arg-371, Tyr-376, Tyr-381, and Arg-382 each contribute to the a glycoprotein site. The PBZ-type 1 zinc finger occupies 372 to 393 (TACMYGANCYRRNPLHFQHFSH). The interval 401–411 (EVHGTDEGVIG) is flexible linker. Residues 414-435 (PECPYGASCYRKNPQHKMEYRH) form a PBZ-type 2 zinc finger. A glycoprotein is bound by residues Tyr-418, Tyr-423, and Arg-424. Positions 440 to 499 (ARVALDEDDDDVGQPSDDEDEEDYEPTDEDSDWHPGKDDEEQEDVDELLKEAKSSLHLKH) are disordered. Positions 445–470 (DEDDDDVGQPSDDEDEEDYEPTDEDS) are enriched in acidic residues. An NAP1L motif motif is present at residues 463 to 487 (YEPTDEDSDWHPGKDDEEQEDVDEL).

It belongs to the APLF family. As to quaternary structure, interacts with LIG4. Interacts with PARP1. Interacts with XRCC4. Interacts (via KBM motif) with XRCC5 and XRCC6; promoting recruitment to DNA damage sites. Interacts with XRCC1. Interacts (via C-terminal disordered region) with histones; interacts with histone H2A, H2B and H3-H4. Poly-ADP-ribosylated. In addition to binding non covalently poly-ADP-ribose via its PBZ-type zinc fingers, the protein is also covalently poly-ADP-ribosylated by PARP1. In terms of processing, phosphorylated in an ATM-dependent manner upon double-strand DNA break.

The protein resides in the nucleus. The protein localises to the chromosome. Its subcellular location is the cytoplasm. It is found in the cytosol. Its function is as follows. Histone chaperone involved in single-strand and double-strand DNA break repair. Recruited to sites of DNA damage through interaction with branched poly-ADP-ribose chains, a polymeric post-translational modification synthesized transiently at sites of chromosomal damage to accelerate DNA strand break repair reactions. Following recruitment to DNA damage sites, acts as a histone chaperone that mediates histone eviction during DNA repair and promotes recruitment of histone variant MACROH2A1. Also has a nuclease activity: displays apurinic-apyrimidinic (AP) endonuclease and 3'-5' exonuclease activities in vitro. Also able to introduce nicks at hydroxyuracil and other types of pyrimidine base damage. Together with PARP3, promotes the retention of the LIG4-XRCC4 complex on chromatin and accelerate DNA ligation during non-homologous end-joining (NHEJ). Also acts as a negative regulator of cell pluripotency by promoting histone exchange. Required for the embryo implantation during the epithelial to mesenchymal transition in females. The polypeptide is Aprataxin and PNK-like factor (Aplf) (Mus musculus (Mouse)).